The following is a 356-amino-acid chain: DNA polymerase IV (356 aa).

Positions Ile6–Gly187 constitute a UmuC domain. Residues Asp10 and Asp105 each contribute to the Mg(2+) site. Residue Glu106 is part of the active site.

The protein belongs to the DNA polymerase type-Y family. In terms of assembly, monomer. The cofactor is Mg(2+).

Its subcellular location is the cytoplasm. It carries out the reaction DNA(n) + a 2'-deoxyribonucleoside 5'-triphosphate = DNA(n+1) + diphosphate. In terms of biological role, poorly processive, error-prone DNA polymerase involved in untargeted mutagenesis. Copies undamaged DNA at stalled replication forks, which arise in vivo from mismatched or misaligned primer ends. These misaligned primers can be extended by PolIV. Exhibits no 3'-5' exonuclease (proofreading) activity. May be involved in translesional synthesis, in conjunction with the beta clamp from PolIII. The polypeptide is DNA polymerase IV (Staphylococcus aureus (strain MRSA252)).